Here is a 197-residue protein sequence, read N- to C-terminus: Peptide deformylase (197 aa).

Residues C106 and H148 each coordinate Fe cation. E149 is a catalytic residue. H152 is a Fe cation binding site.

The protein belongs to the polypeptide deformylase family. It depends on Fe(2+) as a cofactor.

It catalyses the reaction N-terminal N-formyl-L-methionyl-[peptide] + H2O = N-terminal L-methionyl-[peptide] + formate. Its function is as follows. Removes the formyl group from the N-terminal Met of newly synthesized proteins. Requires at least a dipeptide for an efficient rate of reaction. N-terminal L-methionine is a prerequisite for activity but the enzyme has broad specificity at other positions. This is Peptide deformylase from Mycobacterium bovis (strain ATCC BAA-935 / AF2122/97).